Consider the following 769-residue polypeptide: Amino-acid acetyltransferase, mitochondrial (769 aa).

The disordered stretch occupies residues 150–172; sequence LKASPAKSGQEPTESPKESISAS. Residues 159-172 are compositionally biased toward polar residues; the sequence is QEPTESPKESISAS. One can recognise an N-acetyltransferase domain in the interval 590-759; that stretch reads MQPRLGLNDP…YEAVCRSIQP (170 aa).

Belongs to the acetyltransferase family.

It localises to the mitochondrion. The enzyme catalyses L-glutamate + acetyl-CoA = N-acetyl-L-glutamate + CoA + H(+). It participates in amino-acid biosynthesis; L-arginine biosynthesis; N(2)-acetyl-L-ornithine from L-glutamate: step 1/4. In terms of biological role, N-acetylglutamate synthase involved in arginine biosynthesis. This Penicillium rubens (strain ATCC 28089 / DSM 1075 / NRRL 1951 / Wisconsin 54-1255) (Penicillium chrysogenum) protein is Amino-acid acetyltransferase, mitochondrial (arg2).